A 237-amino-acid chain; its full sequence is 2,3-bisphosphoglycerate-dependent phosphoglycerate mutase (237 aa).

Substrate is bound by residues 8–15 (RHGQSAWN), 21–22 (TG), arginine 60, 87–90 (ERHY), lysine 98, 114–115 (RR), and 180–181 (GN). Histidine 9 serves as the catalytic Tele-phosphohistidine intermediate. Glutamate 87 (proton donor/acceptor) is an active-site residue.

It belongs to the phosphoglycerate mutase family. BPG-dependent PGAM subfamily. As to quaternary structure, homodimer.

The catalysed reaction is (2R)-2-phosphoglycerate = (2R)-3-phosphoglycerate. Its pathway is carbohydrate degradation; glycolysis; pyruvate from D-glyceraldehyde 3-phosphate: step 3/5. In terms of biological role, catalyzes the interconversion of 2-phosphoglycerate and 3-phosphoglycerate. The sequence is that of 2,3-bisphosphoglycerate-dependent phosphoglycerate mutase from Hyphomonas neptunium (strain ATCC 15444).